Consider the following 524-residue polypeptide: 3-epi-6-deoxocathasterone 23-monooxygenase CYP90C1 (524 aa).

A helical membrane pass occupies residues 25–45 (YLVAGFLVLTAGILLRPWLWL). Residue cysteine 463 coordinates heme.

The protein belongs to the cytochrome P450 family. Heme serves as cofactor. Widely expressed.

It is found in the endoplasmic reticulum membrane. It carries out the reaction 3-epi-6-deoxocathasterone + reduced [NADPH--hemoprotein reductase] + O2 = 6-deoxotyphasterol + oxidized [NADPH--hemoprotein reductase] + H2O + H(+). The catalysed reaction is (22S,24R)-22-hydroxy-5alpha-ergostan-3-one + reduced [NADPH--hemoprotein reductase] + O2 = 3-dehydro-6-deoxoteasterone + oxidized [NADPH--hemoprotein reductase] + H2O + H(+). Its pathway is plant hormone biosynthesis; brassinosteroid biosynthesis. Functionally, involved in brassinosteroid (BR) biosynthesis. Converts typhasterol (TY) to cathasterone (CS) and 6-deoxotyphasterol (6-deoxoTY) to 6-deoxocathasterone (6-deoxoCT). C-23 hydroxylase that converts directly (22S,24R)-22-hydroxy-5-alpha-ergostan-3-one and 3-epi-6-deoxocathasterone to 3-dehydro-6-deoxoteasterone (6-deoxo3DT, 6-deoxo3DHT) and 6-deoxotyphasterol (6-deoxoTY), respectively. These C-23 hydroxylation shortcuts bypass campestanol, 6-deoxocathasterone, and 6-deoxoteasterone (6-deoxoTE). Also catalyzes the conversion of cathasterone to teasterone (TE), (22S,24R)-22-hydroxyergost-4-en-3-one (22-OH-4-en-3-one) to (22R,23R)-22,23-dihydroxy-campest-4-en-3-one (22,23-diOH-4-en-3-one) and (22S)-22-hydroxycampesterol (22-OHCR) to (22R,23R)-22,23-dihydroxycampesterol (22,23-diOHCR). Required for the regulation of polar elongation of leaf cells. Required for the longitudinal elongation of floral organs. This is 3-epi-6-deoxocathasterone 23-monooxygenase CYP90C1 from Arabidopsis thaliana (Mouse-ear cress).